A 456-amino-acid chain; its full sequence is MGTIEKRSFSFRLRRSFGDGGSTNSRNSNNNSSTCTNHNNQKRCSTPLTPTSTSTGRLEVPGAASVSRRSSIYKKPDKNDGGQIHLIPDVELPLMTFADQYNIEKTLAEGCFAKILLCRHRPTNTLVVLKAVHAELTTIKEFQKEFHYNYELSHHHHILSAYAVAFQTMDYYVFAMEHAPYGDLASNIGPNGLHENACKLISEQLSSALGFMHSKNLVHRDLKIENILVFTPDFTRVKLCDFGATTKKGLLVHKVKHTWTSCVPPEQLELIKNERFQCLPVSDSWQFGILLYNILTGNPPWQSADWVKDQSYANFMKYEQRKTTKVPDNFRRFSPRLMRCFRKYLSHDPEDRCKITEVAKYMKDRWVECRISTSKSATLISPTNHDQDSCIYLNQREGRLSGDENKLRFKRMMSTYGLDIPIDQAMVRRRVWDWLSTCDANFDPDVESLHALDLLQ.

The segment at 15–78 (RSFGDGGSTN…RSSIYKKPDK (64 aa)) is disordered. Over residues 22–55 (STNSRNSNNNSSTCTNHNNQKRCSTPLTPTSTST) the composition is skewed to low complexity. In terms of domain architecture, Protein kinase spans 101–367 (YNIEKTLAEG…VAKYMKDRWV (267 aa)). Residues 107-115 (LAEGCFAKI) and lysine 130 each bind ATP. The Proton acceptor role is filled by aspartate 221. Phosphoserine; by PKA is present on serine 334.

The protein belongs to the protein kinase superfamily. Ser/Thr protein kinase family. It depends on Mg(2+) as a cofactor. As to expression, expressed in the mushroom bodies (at protein level).

It carries out the reaction L-seryl-[protein] + ATP = O-phospho-L-seryl-[protein] + ADP + H(+). The enzyme catalyses L-threonyl-[protein] + ATP = O-phospho-L-threonyl-[protein] + ADP + H(+). With respect to regulation, activated by Pka-C1-mediated phosphorylation of Ser-334. Its function is as follows. Serine/threonine-protein kinase involved in memory formation. Together with the cAMP-dependent protein kinase A Pka-C1, promotes long-term memory (LTM) by regulating CrebB stability and activity. Involved in the maintenance of anesthesia-sensitive memory (ASM) which includes short-term memory (STM) and middle-term memory (MTM). The polypeptide is Serine/threonine-protein kinase meng-po (Drosophila melanogaster (Fruit fly)).